Consider the following 137-residue polypeptide: Small ribosomal subunit protein uS9 (137 aa).

The tract at residues 100-137 is disordered; the sequence is ENRPPLKSEGYLTRDPRAKERKKYGLHKARKAPQYSKR. Over residues 118–137 the composition is skewed to basic residues; it reads KERKKYGLHKARKAPQYSKR.

The protein belongs to the universal ribosomal protein uS9 family.

The protein is Small ribosomal subunit protein uS9 of Microcystis aeruginosa (strain NIES-843 / IAM M-2473).